The primary structure comprises 282 residues: Nucleotide-binding protein Fnod_1159 (282 aa).

Position 9–16 (9–16) interacts with ATP; that stretch reads GHSGAGKS. 57-60 provides a ligand contact to GTP; the sequence is DIRS.

This sequence belongs to the RapZ-like family.

Functionally, displays ATPase and GTPase activities. The polypeptide is Nucleotide-binding protein Fnod_1159 (Fervidobacterium nodosum (strain ATCC 35602 / DSM 5306 / Rt17-B1)).